We begin with the raw amino-acid sequence, 273 residues long: NAD-dependent protein deacylase (273 aa).

The Deacetylase sirtuin-type domain maps to 20–272; that stretch reads RERLRQRIFF…PEFVDKFLKG (253 aa). 48 to 67 serves as a coordination point for NAD(+); it reads GAGISAESGIRTFRAADGLW. Substrate-binding residues include Y92 and R95. 129 to 132 serves as a coordination point for NAD(+); sequence QNID. H147 (proton acceptor) is an active-site residue. Residues C155 and C174 each contribute to the Zn(2+) site. NAD(+)-binding positions include 214–216, 240–242, and A258; these read GTS and NLE.

It belongs to the sirtuin family. Class III subfamily. The cofactor is Zn(2+).

The protein resides in the cytoplasm. It carries out the reaction N(6)-acetyl-L-lysyl-[protein] + NAD(+) + H2O = 2''-O-acetyl-ADP-D-ribose + nicotinamide + L-lysyl-[protein]. The catalysed reaction is N(6)-succinyl-L-lysyl-[protein] + NAD(+) + H2O = 2''-O-succinyl-ADP-D-ribose + nicotinamide + L-lysyl-[protein]. The enzyme catalyses N(6)-(2-hydroxyisobutanoyl)-L-lysyl-[protein] + NAD(+) + H2O = 2''-O-(2-hydroxyisobutanoyl)-ADP-D-ribose + nicotinamide + L-lysyl-[protein]. Its function is as follows. NAD-dependent lysine deacetylase that specifically removes acetyl groups on target proteins. Also acts as a protein-lysine deacylase by mediating protein desuccinylation and de-2-hydroxyisobutyrylation. Modulates the activities of several proteins which are inactive in their acylated form. The protein is NAD-dependent protein deacylase of Salmonella typhi.